A 214-amino-acid polypeptide reads, in one-letter code: MTRVKICGVTDTEDRDAVVTAGADAVGIIHGVPVDTPREVDEGTAETIADGVPPFVTSVLVMMPTTVQEAVRRIDRIEPDAVQVHDGLSPAELGALNNRITQDIVAVVEADAPAIEDYATHADALLVDSVDADGGGGTGETHDWERTRDLVDSLDVPIVLAGGLTPENVTEAVETVEPFAVDVASGVESAGGTKDHDAVGRFVRNAKQAPEGAV.

The protein belongs to the TrpF family.

It carries out the reaction N-(5-phospho-beta-D-ribosyl)anthranilate = 1-(2-carboxyphenylamino)-1-deoxy-D-ribulose 5-phosphate. It functions in the pathway amino-acid biosynthesis; L-tryptophan biosynthesis; L-tryptophan from chorismate: step 3/5. The sequence is that of N-(5'-phosphoribosyl)anthranilate isomerase from Haloarcula marismortui (strain ATCC 43049 / DSM 3752 / JCM 8966 / VKM B-1809) (Halobacterium marismortui).